A 464-amino-acid polypeptide reads, in one-letter code: MKRIKIKELLSNSSQYIDQQVVLKGWVRTKRGNKHVAFVALNDGSTIHTIQIVLDVAKFNEEQLKDVTTGACISISGKVVTSQGAGQSIEVQGDTLEVIGVADPETYPLQKKGHSLEFLREIAHLRPRTNTFSCVLRLRHAMAFAVHSFFNEKGFVYVHTPIITGSDAEGAGAMFQVTTLDLKNPSKTKEGEVDFTKDFFGKATNLTVSGQLEGELAAMALGEVYTFGPTFRAENSNTTRHLAEFWMIEPEMAFYEIQDNMDLAEEFLKYLVKYALDNCIDDLNFLNEMYDKELIERLKSVVETPFVRLNYTEAVDILIATKQKFEYKVEWGIDLQSEHERYLVEKHFKKPVILTNYPKAIKAFYMKANEDGKTVRAMDVLFPGIGEIIGGSQREDNLEKLQERCKEVGIHENDIWWYLETRKFGSAPHSGFGLGFERLMLFVTGMGNIRDVIPFPRTPQSAEF.

It belongs to the class-II aminoacyl-tRNA synthetase family. Homodimer.

It is found in the cytoplasm. The catalysed reaction is tRNA(Asn) + L-asparagine + ATP = L-asparaginyl-tRNA(Asn) + AMP + diphosphate + H(+). The protein is Asparagine--tRNA ligase of Cytophaga hutchinsonii (strain ATCC 33406 / DSM 1761 / CIP 103989 / NBRC 15051 / NCIMB 9469 / D465).